A 469-amino-acid polypeptide reads, in one-letter code: Phosphatidylcholine:ceramide cholinephosphotransferase 1 (469 aa).

The segment at 40–177 is disordered; it reads TTKIGPKLET…GDKPASPHDR (138 aa). Basic and acidic residues-rich tracts occupy residues 72–91, 100–117, and 162–177; these read AAEK…HEET, SHHD…GDGK, and VRLE…PHDR. 6 helical membrane-spanning segments follow: residues 186 to 206, 231 to 251, 262 to 282, 300 to 320, 327 to 347, and 355 to 375; these read LVAF…LSWI, LRLC…LILF, LCFI…VTPV, TFSL…LNLF, LCGD…ALFI, and FYIL…FLVL. His336 is an active-site residue. The Cytoplasmic segment spans residues 376–469; sequence SHGHYTIDVI…RNGAARPAFE (94 aa). Active-site residues include His379 and Asp383.

The protein belongs to the sphingomyelin synthase family.

The protein localises to the golgi apparatus membrane. The catalysed reaction is an N-acylsphing-4-enine + a 1,2-diacyl-sn-glycero-3-phosphocholine = a sphingomyelin + a 1,2-diacyl-sn-glycerol. It catalyses the reaction an N-acyl-15-methylhexadecasphing-4-enine + a 1,2-diacyl-sn-glycero-3-phosphocholine = an N-acyl-15-methylhexadecasphing-4-enine-1-phosphocholine + a 1,2-diacyl-sn-glycerol. The protein operates within lipid metabolism; sphingolipid metabolism. In terms of biological role, sphingomyelin synthases (SM synthase or SMS) synthesize the sphingolipid sphingomyelin (SM) through transfer of the phosphatidyl head group of 1,2-diacyl-sn-glycero-3-phosphocholine (phosphatidylcholine, PC) on to the primary hydroxyl of ceramide (N-acylsphingoid base), yielding 1,2-diacyl-sn-glycerol (diacylglycerol, DAG) as a side product. Functions as a bidirectional lipid cholinephosphotransferases capable of converting PC and ceramide to SM and DAG and vice versa depending on the respective levels of ceramide and DAG as phosphocholine acceptors, respectively. The polypeptide is Phosphatidylcholine:ceramide cholinephosphotransferase 1 (sms-1) (Caenorhabditis elegans).